A 179-amino-acid chain; its full sequence is UPF0227 protein Shewana3_2292 (179 aa).

This sequence belongs to the UPF0227 family.

This is UPF0227 protein Shewana3_2292 from Shewanella sp. (strain ANA-3).